Here is a 277-residue protein sequence, read N- to C-terminus: Shikimate dehydrogenase (NADP(+)) (277 aa).

Residues 15–17 and threonine 62 contribute to the shikimate site; that span reads SLS. Lysine 66 acts as the Proton acceptor in catalysis. 2 residues coordinate shikimate: asparagine 87 and aspartate 102. Residues 127–131, 151–156, and isoleucine 219 each bind NADP(+); these read GSGGA and NRTVDK. Tyrosine 221 is a binding site for shikimate. Glycine 242 is a binding site for NADP(+).

It belongs to the shikimate dehydrogenase family. In terms of assembly, homodimer.

It catalyses the reaction shikimate + NADP(+) = 3-dehydroshikimate + NADPH + H(+). Its pathway is metabolic intermediate biosynthesis; chorismate biosynthesis; chorismate from D-erythrose 4-phosphate and phosphoenolpyruvate: step 4/7. Its function is as follows. Involved in the biosynthesis of the chorismate, which leads to the biosynthesis of aromatic amino acids. Catalyzes the reversible NADPH linked reduction of 3-dehydroshikimate (DHSA) to yield shikimate (SA). In Bacillus cereus (strain B4264), this protein is Shikimate dehydrogenase (NADP(+)).